We begin with the raw amino-acid sequence, 183 residues long: Hypoxanthine/guanine phosphoribosyltransferase (183 aa).

Belongs to the purine/pyrimidine phosphoribosyltransferase family. Archaeal HPRT subfamily. Homodimer.

It is found in the cytoplasm. The enzyme catalyses IMP + diphosphate = hypoxanthine + 5-phospho-alpha-D-ribose 1-diphosphate. It catalyses the reaction GMP + diphosphate = guanine + 5-phospho-alpha-D-ribose 1-diphosphate. It participates in purine metabolism; IMP biosynthesis via salvage pathway; IMP from hypoxanthine: step 1/1. Catalyzes a salvage reaction resulting in the formation of IMP that is energically less costly than de novo synthesis. This chain is Hypoxanthine/guanine phosphoribosyltransferase, found in Methanotorris igneus (strain DSM 5666 / JCM 11834 / Kol 5).